The primary structure comprises 250 residues: Agamous-like MADS-box protein AGL9 homolog (250 aa).

Positions 3–57 constitute an MADS-box domain; it reads RGRVELKMIENKINRQVTFAKRRKRLLKKAYELSVLCDAEVALIIFSNRGKLYEF. The K-box domain maps to 87-177; the sequence is TQSSQQEYLK…KRRFEESSQA (91 aa).

In terms of tissue distribution, expressed in petals and weakly in sepals but not in the column (gynostemium).

The protein resides in the nucleus. In terms of biological role, probable transcription factor active in inflorescence development and floral organogenesis. This chain is Agamous-like MADS-box protein AGL9 homolog, found in Aranda deborah (Orchid).